A 180-amino-acid polypeptide reads, in one-letter code: CASP-like protein 2D1 (180 aa).

The Cytoplasmic segment spans residues 1 to 7 (MAASGLK). The chain crosses the membrane as a helical span at residues 8–28 (VPEMALRVCVVPLALASLWEM). At 29-48 (ATNAQADDTYGEVKFSDLSG) the chain is on the extracellular side. A helical membrane pass occupies residues 49–69 (FSYLVGVNAVTAAYALVSILL). At 70 to 79 (SSLKPLARYD) the chain is on the cytoplasmic side. A helical transmembrane segment spans residues 80–100 (WVILVMDQASAYLLVTSASAA). The Extracellular portion of the chain corresponds to 101-129 (AELLQLARRGDREVSWGEVCSYFGRFCGK). A helical membrane pass occupies residues 130–150 (ATVSLALHAAALACFVALALV). Residues 151 to 180 (SAFRVLSTTGSSCHPPKHAQAQEHEQGRYN) are Cytoplasmic-facing. Residues 161–180 (SSCHPPKHAQAQEHEQGRYN) form a disordered region. Residues 170–180 (QAQEHEQGRYN) show a composition bias toward basic and acidic residues.

The protein belongs to the Casparian strip membrane proteins (CASP) family. In terms of assembly, homodimer and heterodimers.

The protein resides in the cell membrane. The chain is CASP-like protein 2D1 from Sorghum bicolor (Sorghum).